The following is an 872-amino-acid chain: G-type lectin S-receptor-like serine/threonine-protein kinase At5g24080 (872 aa).

An N-terminal signal peptide occupies residues 1–25 (MSSFHFYFPSVGLFSFFCFFLVSLA). The Extracellular portion of the chain corresponds to 26–472 (TEPHIGLGSK…SRKSHGLRQK (447 aa)). One can recognise a Bulb-type lectin domain in the interval 30 to 149 (IGLGSKLKAS…EVTAGPTIWQ (120 aa)). N-linked (GlcNAc...) asparagine glycans are attached at residues N49, N117, N208, N219, N261, and N294. The 39-residue stretch at 306 to 344 (VSNPCDIAGICGNGVCNLDRTKKNADCLCLPGSVKLPDQ) folds into the EGF-like; atypical domain. 2 disulfide bridges follow: C310/C321 and C316/C332. N353, N367, and N390 each carry an N-linked (GlcNAc...) asparagine glycan. The 88-residue stretch at 360 to 447 (CESNINRNGS…PGSTLFVKTR (88 aa)) folds into the PAN domain. 2 cysteine pairs are disulfide-bonded: C400-C424 and C404-C410. Residues N449 and N459 are each glycosylated (N-linked (GlcNAc...) asparagine). A helical transmembrane segment spans residues 473–493 (VLVIPIVVGMLVLVALLGMLL). Topologically, residues 494-872 (YYNLDRKRTL…TCSYSSMSPR (379 aa)) are cytoplasmic. The residue at position 521 (T521) is a Phosphothreonine. Residues 530–810 (NNFSQLLGSG…LEGTSDEINL (281 aa)) enclose the Protein kinase domain. Residues 536–544 (LGSGGFGTV) and K558 each bind ATP. Position 603 is a phosphotyrosine (Y603). A caM-binding region spans residues 619–637 (EQTANLLDWRTRFEIAVAT). Catalysis depends on D656, which acts as the Proton acceptor. A phosphothreonine mark is found at T690 and T695.

The protein belongs to the protein kinase superfamily. Ser/Thr protein kinase family.

The protein localises to the cell membrane. The enzyme catalyses L-seryl-[protein] + ATP = O-phospho-L-seryl-[protein] + ADP + H(+). The catalysed reaction is L-threonyl-[protein] + ATP = O-phospho-L-threonyl-[protein] + ADP + H(+). The sequence is that of G-type lectin S-receptor-like serine/threonine-protein kinase At5g24080 from Arabidopsis thaliana (Mouse-ear cress).